Here is a 226-residue protein sequence, read N- to C-terminus: MTWDGLPTQPLLMLLMLLFAAGSESALAGCPGCGPGVQEEDAGSPADGCAETGGCFRREGQPCGVYIPKCAPGLQCQPRENEETPLRALLIGQGRCQRARGPSEETTKESKPHGGASRPRDRDRQKNPRTSAAPIRPSPVQDGEMGPCRRHLDSVLQQLQTEVFRGGANGLYVPNCDLRGFYRKQQCRSSQGNRRGPCWCVDPMGQPLPVSPDGQGSSQCSARSSG.

The first 25 residues, 1–25 (MTWDGLPTQPLLMLLMLLFAAGSES), serve as a signal peptide directing secretion. An IGFBP N-terminal domain is found at 26-99 (ALAGCPGCGP…LIGQGRCQRA (74 aa)). Disulfide bonds link C30/C33, C49/C55, C63/C76, and C70/C96. Positions 92-148 (GQGRCQRARGPSEETTKESKPHGGASRPRDRDRQKNPRTSAAPIRPSPVQDGEMGPC) are disordered. Positions 101 to 126 (GPSEETTKESKPHGGASRPRDRDRQK) are enriched in basic and acidic residues. Residues 145–220 (MGPCRRHLDS…SPDGQGSSQC (76 aa)) enclose the Thyroglobulin type-1 domain. 3 cysteine pairs are disulfide-bonded: C148/C176, C187/C198, and C200/C220. Residues 205–226 (GQPLPVSPDGQGSSQCSARSSG) form a disordered region. Positions 214–226 (GQGSSQCSARSSG) are enriched in polar residues.

In terms of assembly, interacts (via C-terminal domain) with PHB2. O-glycosylated.

It is found in the secreted. Functionally, IGF-binding proteins prolong the half-life of the IGFs and have been shown to either inhibit or stimulate the growth promoting effects of the IGFs on cell culture. They alter the interaction of IGFs with their cell surface receptors. Activates the MAPK signaling pathway and induces cell migration. In Rattus norvegicus (Rat), this protein is Insulin-like growth factor-binding protein 6 (Igfbp6).